We begin with the raw amino-acid sequence, 311 residues long: Heparan sulfate glucosamine 3-O-sulfotransferase 1 (311 aa).

A signal peptide spans 1 to 20 (MTLLLLGAVLLVAQPQLVPS). N52 carries N-linked (GlcNAc...) asparagine glycosylation. 3'-phosphoadenylyl sulfate-binding positions include 68-72 (KGGTR), R151, and S159. Residues N196, N246, and N253 are each glycosylated (N-linked (GlcNAc...) asparagine). Y259 contacts 3'-phosphoadenylyl sulfate. C260 and C269 are oxidised to a cystine. 274-278 (KGRAH) is a 3'-phosphoadenylyl sulfate binding site.

The protein belongs to the sulfotransferase 1 family.

It localises to the golgi apparatus lumen. It carries out the reaction alpha-D-glucosaminyl-[heparan sulfate](n) + 3'-phosphoadenylyl sulfate = 3-sulfo-alpha-D-glucosaminyl-[heparan sulfate](n) + adenosine 3',5'-bisphosphate + H(+). Functionally, sulfotransferase that utilizes 3'-phospho-5'-adenylyl sulfate (PAPS) to catalyze the transfer of a sulfo group to position 3 of glucosamine residues in heparan. Catalyzes the rate limiting step in the biosynthesis of heparan sulfate (HSact). This modification is a crucial step in the biosynthesis of anticoagulant heparan sulfate as it completes the structure of the antithrombin pentasaccharide binding site. The protein is Heparan sulfate glucosamine 3-O-sulfotransferase 1 (Hs3st1) of Rattus norvegicus (Rat).